The sequence spans 126 residues: UPF0292 protein TSIB_0423 (126 aa).

In terms of domain architecture, Toprim spans 20–100 (NGVILVEGMR…RVDTNTRREL (81 aa)). Residues Glu26, Asp69, and Asp71 each coordinate Mg(2+).

This sequence belongs to the UPF0292 family. Mg(2+) serves as cofactor.

This chain is UPF0292 protein TSIB_0423, found in Thermococcus sibiricus (strain DSM 12597 / MM 739).